A 283-amino-acid chain; its full sequence is Thymidylate synthase (283 aa).

Residue R22 participates in dUMP binding. C160 functions as the Nucleophile in the catalytic mechanism. DUMP is bound by residues 180–183, N191, and 221–223; these read RSCD and HIY. D183 serves as a coordination point for (6R)-5,10-methylene-5,6,7,8-tetrahydrofolate. (6R)-5,10-methylene-5,6,7,8-tetrahydrofolate is bound at residue S282.

This sequence belongs to the thymidylate synthase family. Bacterial-type ThyA subfamily. As to quaternary structure, homodimer.

The protein localises to the cytoplasm. The catalysed reaction is dUMP + (6R)-5,10-methylene-5,6,7,8-tetrahydrofolate = 7,8-dihydrofolate + dTMP. It participates in pyrimidine metabolism; dTTP biosynthesis. Functionally, catalyzes the reductive methylation of 2'-deoxyuridine-5'-monophosphate (dUMP) to 2'-deoxythymidine-5'-monophosphate (dTMP) while utilizing 5,10-methylenetetrahydrofolate (mTHF) as the methyl donor and reductant in the reaction, yielding dihydrofolate (DHF) as a by-product. This enzymatic reaction provides an intracellular de novo source of dTMP, an essential precursor for DNA biosynthesis. The polypeptide is Thymidylate synthase (Shewanella piezotolerans (strain WP3 / JCM 13877)).